We begin with the raw amino-acid sequence, 253 residues long: Hydroxyacylglutathione hydrolase (253 aa).

Positions 54, 56, 58, 59, 112, 131, and 169 each coordinate Zn(2+).

The protein belongs to the metallo-beta-lactamase superfamily. Glyoxalase II family. Monomer. The cofactor is Zn(2+).

The enzyme catalyses an S-(2-hydroxyacyl)glutathione + H2O = a 2-hydroxy carboxylate + glutathione + H(+). It functions in the pathway secondary metabolite metabolism; methylglyoxal degradation; (R)-lactate from methylglyoxal: step 2/2. Functionally, thiolesterase that catalyzes the hydrolysis of S-D-lactoyl-glutathione to form glutathione and D-lactic acid. The protein is Hydroxyacylglutathione hydrolase of Bartonella henselae (strain ATCC 49882 / DSM 28221 / CCUG 30454 / Houston 1) (Rochalimaea henselae).